A 1031-amino-acid chain; its full sequence is Kinesin heavy chain (1031 aa).

Residues 8–325 enclose the Kinesin motor domain; that stretch reads NIKVVCRVRP…LMFGQRAKTI (318 aa). 84–91 is an ATP binding site; the sequence is GQTSSGKT. A coiled-coil region spans residues 393-857; the sequence is PKQMTVHVSE…RDNADLRCEL (465 aa). Residues 673-686 are compositionally biased toward basic and acidic residues; it reads TDQEDKKREEEDKM. Disordered regions lie at residues 673-692 and 906-1031; these read TDQE…ATEM and RNFA…EQGS. The globular stretch occupies residues 858–1031; sequence PKLERRLRAT…PLTTSGEQGS (174 aa). Over residues 932 to 949 the composition is skewed to gly residues; sequence GSTGIRGGGYSGIRGGGS. Polar residues-rich tracts occupy residues 964–977 and 1014–1031; these read SHNN…NPND and RNNT…EQGS.

The protein belongs to the TRAFAC class myosin-kinesin ATPase superfamily. Kinesin family. Kinesin subfamily. In terms of assembly, oligomer composed of two heavy chains and two light chains.

Its subcellular location is the cytoplasm. The protein localises to the cytoskeleton. Functionally, kinesin is a microtubule-associated force-producing protein that may play a role in organelle transport. The chain is Kinesin heavy chain from Strongylocentrotus purpuratus (Purple sea urchin).